The sequence spans 224 residues: PKHD-type hydroxylase Sbal195_0750 (224 aa).

In terms of domain architecture, Fe2OG dioxygenase spans Q78–S176. Positions 96, 98, and 157 each coordinate Fe cation. R167 serves as a coordination point for 2-oxoglutarate.

The cofactor is Fe(2+). L-ascorbate serves as cofactor.

This Shewanella baltica (strain OS195) protein is PKHD-type hydroxylase Sbal195_0750.